A 60-amino-acid chain; its full sequence is Large ribosomal subunit protein bL32 (60 aa).

The interval 1–21 (MAVQQNKKSPSKRGMHRAHNA) is disordered. A compositionally biased stretch (basic residues) spans 9–19 (SPSKRGMHRAH).

Belongs to the bacterial ribosomal protein bL32 family.

The chain is Large ribosomal subunit protein bL32 from Albidiferax ferrireducens (strain ATCC BAA-621 / DSM 15236 / T118) (Rhodoferax ferrireducens).